Reading from the N-terminus, the 96-residue chain is Co-chaperonin GroES (96 aa).

It belongs to the GroES chaperonin family. In terms of assembly, heptamer of 7 subunits arranged in a ring. Interacts with the chaperonin GroEL.

It is found in the cytoplasm. In terms of biological role, together with the chaperonin GroEL, plays an essential role in assisting protein folding. The GroEL-GroES system forms a nano-cage that allows encapsulation of the non-native substrate proteins and provides a physical environment optimized to promote and accelerate protein folding. GroES binds to the apical surface of the GroEL ring, thereby capping the opening of the GroEL channel. The chain is Co-chaperonin GroES from Wolbachia pipientis wMel.